The primary structure comprises 114 residues: ASAAVSVSPATGLADGATVTVSASGFATSTSATALQCAILADGRGACNVAEFHDFSLSGGEGTTSVVVRRSFTGYVMPDGPEVGAVDCDTAPGGCEIVVGGNTGEYGNAAISFG.

Intrachain disulfides connect Cys37–Cys47 and Cys88–Cys95.

The protein belongs to the neocarzinostatin family.

Its function is as follows. Binds non-covalently to an enediyne chromophore which is the cytotoxic and mutagenic component of the antibiotic. The chromophore cleaves duplex DNA site-specifically in a single-stranded manner. The apoprotein cleaves proteins selectively, in particular highly basic histones, with H1 proteins being cleaved the more readily. This chain is Apokedarcidin, found in Actinomycete sp. (strain L585-6 / ATCC 53650).